Reading from the N-terminus, the 1303-residue chain is DNA-directed RNA polymerase subunit beta (1303 aa).

This sequence belongs to the RNA polymerase beta chain family. As to quaternary structure, the RNAP catalytic core consists of 2 alpha, 1 beta, 1 beta' and 1 omega subunit. When a sigma factor is associated with the core the holoenzyme is formed, which can initiate transcription.

The catalysed reaction is RNA(n) + a ribonucleoside 5'-triphosphate = RNA(n+1) + diphosphate. DNA-dependent RNA polymerase catalyzes the transcription of DNA into RNA using the four ribonucleoside triphosphates as substrates. This Chlorobaculum tepidum (strain ATCC 49652 / DSM 12025 / NBRC 103806 / TLS) (Chlorobium tepidum) protein is DNA-directed RNA polymerase subunit beta.